Consider the following 96-residue polypeptide: uncharacterized protein (96 aa).

C10, C16, and C55 together coordinate [3Fe-4S] cluster. A disordered region spans residues 67 to 96 (AGDGERASADPAPSPAEAERHAAKDQHNLG). The span at 83–96 (EAERHAAKDQHNLG) shows a compositional bias: basic and acidic residues.

Requires [3Fe-4S] cluster as cofactor.

Electron transport protein for the cytochrome systems. This is an uncharacterized protein from Bradyrhizobium diazoefficiens (strain JCM 10833 / BCRC 13528 / IAM 13628 / NBRC 14792 / USDA 110).